Here is a 565-residue protein sequence, read N- to C-terminus: DNA-binding protein scr1 (565 aa).

A compositionally biased stretch (polar residues) spans 1–19 (MSEATTATTTGKPSRSTKN). The interval 1–25 (MSEATTATTTGKPSRSTKNPDAPRP) is disordered. C2H2-type zinc fingers lie at residues 26 to 48 (YKCP…IRTH) and 54 to 78 (HVCT…ARIH). Disordered regions lie at residues 79 to 119 (TNAN…VHMT), 261 to 303 (SNAP…STGS), 390 to 434 (RPVS…DDPS), and 466 to 565 (ASTP…MTKP). Residues 80–102 (NANSRRNAAAAAAANNSARSSNS) show a composition bias toward low complexity. 3 stretches are compositionally biased toward polar residues: residues 108–119 (EPSTNNAGVHMT), 276–286 (LPSSSNTSPNH), and 294–303 (GLTSNSSTGS). A compositionally biased stretch (low complexity) spans 391–413 (PVSPCSTAPSSPTFSTRSFSPTP). Over residues 466 to 478 (ASTPASGAVSRTP) the composition is skewed to polar residues. Low complexity-rich tracts occupy residues 479–492 (SSVS…VNSS), 517–526 (FSSSSRVSVS), and 537–555 (SSST…PAFS).

Belongs to the creA/MIG C2H2-type zinc-finger protein family.

Its subcellular location is the nucleus. In terms of biological role, involved in carbon catabolite repression. Represses the transcription of various genes including the inv1 gene. In Schizosaccharomyces pombe (strain 972 / ATCC 24843) (Fission yeast), this protein is DNA-binding protein scr1 (scr1).